The chain runs to 316 residues: tRNA dimethylallyltransferase (316 aa).

Residue 17–24 (GPTASGKT) coordinates ATP. Position 19–24 (19–24 (TASGKT)) interacts with substrate. Interaction with substrate tRNA regions lie at residues 42–45 (DSAL), 166–170 (QRLSR), and 247–252 (RCVGYR).

Belongs to the IPP transferase family. Monomer. Mg(2+) serves as cofactor.

The enzyme catalyses adenosine(37) in tRNA + dimethylallyl diphosphate = N(6)-dimethylallyladenosine(37) in tRNA + diphosphate. Functionally, catalyzes the transfer of a dimethylallyl group onto the adenine at position 37 in tRNAs that read codons beginning with uridine, leading to the formation of N6-(dimethylallyl)adenosine (i(6)A). The protein is tRNA dimethylallyltransferase of Salmonella arizonae (strain ATCC BAA-731 / CDC346-86 / RSK2980).